The chain runs to 717 residues: Transport/processing ATP-binding protein ComA (717 aa).

The Peptidase C39 domain occupies 11–138; sequence QVDQMDCGVA…EEWTGVTLFM (128 aa). The active site involves Cys17. 6 helical membrane-spanning segments follow: residues 166-186, 205-225, 237-257, 282-302, 306-326, and 397-417; these read GLIA…IVGS, LGII…LSYA, LSID…MSFF, TILS…VLFS, NLFF…FAFM, and VAHL…VMDG. The region spanning 168–450 is the ABC transmembrane type-1 domain; sequence IANIVLATLL…IINLQTKLQT (283 aa). The region spanning 484-717 is the ABC transporter domain; it reads MTFKQVHYKY…GGFYAHLVNS (234 aa). 517–524 is a binding site for ATP; the sequence is GISGSGKT.

This sequence belongs to the ABC transporter superfamily. Competence factor exporter (TC 3.A.1.112.1) family.

It localises to the cell membrane. Functionally, required for induction of competence. Seems to transport the competence-stimulating peptide (CSP). The sequence is that of Transport/processing ATP-binding protein ComA (comA) from Streptococcus pneumoniae serotype 4 (strain ATCC BAA-334 / TIGR4).